Here is a 369-residue protein sequence, read N- to C-terminus: MRDNTQHYRELFLDDIPLMDVRAPVEYHKGAFPNTVNRPLMNDIERQKVGTSYKQHGQQAAIALGHELVCGALKAERLAAWKAFAEANPNGYLYCFRGGLRSQIVQQWLKQDAGIDYPRVIGGYKALRNFLFETTRAAVDECDFVLVGGLTGCGKTEVIAALDNSLDLEGHANHRGSSFGRRATPQPAQIDFENRLAIDILKKRHRGVGQFVLEDEGRIVGSCSLPLELYQGMQSYPLVWLEDAFEQRVERILRDYVIDLRSEFERVVGVEEGFAAFSAYLQKSLAGIVKRLGGERYQRLAAILVQALEEQGRDGSVDTHRGWIEGLLKEYYDPMYAFQRQSKEDRVEFRGNQAEVIGYLRQRQALRPS.

Positions 12–136 (FLDDIPLMDV…LRNFLFETTR (125 aa)) constitute a Rhodanese domain. Cysteine 95 functions as the S-selanylcysteine intermediate in the catalytic mechanism.

Belongs to the SelU family. As to quaternary structure, monomer.

It carries out the reaction 5-methylaminomethyl-2-thiouridine(34) in tRNA + selenophosphate + (2E)-geranyl diphosphate + H2O + H(+) = 5-methylaminomethyl-2-selenouridine(34) in tRNA + (2E)-thiogeraniol + phosphate + diphosphate. It catalyses the reaction 5-methylaminomethyl-2-thiouridine(34) in tRNA + (2E)-geranyl diphosphate = 5-methylaminomethyl-S-(2E)-geranyl-thiouridine(34) in tRNA + diphosphate. The enzyme catalyses 5-methylaminomethyl-S-(2E)-geranyl-thiouridine(34) in tRNA + selenophosphate + H(+) = 5-methylaminomethyl-2-(Se-phospho)selenouridine(34) in tRNA + (2E)-thiogeraniol. The catalysed reaction is 5-methylaminomethyl-2-(Se-phospho)selenouridine(34) in tRNA + H2O = 5-methylaminomethyl-2-selenouridine(34) in tRNA + phosphate. Functionally, involved in the post-transcriptional modification of the uridine at the wobble position (U34) of tRNA(Lys), tRNA(Glu) and tRNA(Gln). Catalyzes the conversion of 2-thiouridine (S2U-RNA) to 2-selenouridine (Se2U-RNA). Acts in a two-step process involving geranylation of 2-thiouridine (S2U) to S-geranyl-2-thiouridine (geS2U) and subsequent selenation of the latter derivative to 2-selenouridine (Se2U) in the tRNA chain. In Pseudomonas aeruginosa (strain LESB58), this protein is tRNA 2-selenouridine synthase.